The following is a 138-amino-acid chain: MANPELLEEQREETRLIIEELLEDGSDPDALYTIEHHLSADDFETLEKAAVEAFKLGYEVTEPEELEVEEGDTVICCDILSECALNAELIDAQVEQLMNLAEKYDVEYDGWGTYFEDPNGEEGDDDDYVDEDDDGVRH.

The tract at residues 111–138 (WGTYFEDPNGEEGDDDDYVDEDDDGVRH) is disordered. The span at 118-138 (PNGEEGDDDDYVDEDDDGVRH) shows a compositional bias: acidic residues.

This sequence belongs to the RraB family. As to quaternary structure, interacts with the C-terminal region of Rne.

Its subcellular location is the cytoplasm. Globally modulates RNA abundance by binding to RNase E (Rne) and regulating its endonucleolytic activity. Can modulate Rne action in a substrate-dependent manner by altering the composition of the degradosome. The protein is Regulator of ribonuclease activity B of Salmonella typhi.